Here is a 519-residue protein sequence, read N- to C-terminus: Probable cytosol aminopeptidase (519 aa).

Mn(2+) contacts are provided by K251 and D256. K263 is a catalytic residue. Mn(2+) contacts are provided by D274, D333, and E335. R337 is a catalytic residue. Residues 487 to 502 (VAPAAPAAPAAPAARP) show a composition bias toward low complexity. The disordered stretch occupies residues 487 to 519 (VAPAAPAAPAAPAARPAAKRTGRSQGGLKRTAP).

This sequence belongs to the peptidase M17 family. Mn(2+) is required as a cofactor.

The protein resides in the cytoplasm. The catalysed reaction is Release of an N-terminal amino acid, Xaa-|-Yaa-, in which Xaa is preferably Leu, but may be other amino acids including Pro although not Arg or Lys, and Yaa may be Pro. Amino acid amides and methyl esters are also readily hydrolyzed, but rates on arylamides are exceedingly low.. It carries out the reaction Release of an N-terminal amino acid, preferentially leucine, but not glutamic or aspartic acids.. Its function is as follows. Presumably involved in the processing and regular turnover of intracellular proteins. Catalyzes the removal of unsubstituted N-terminal amino acids from various peptides. The protein is Probable cytosol aminopeptidase of Verminephrobacter eiseniae (strain EF01-2).